The chain runs to 361 residues: MESGHRFDAQTLHSFIQAVFRQMGSEEQEAKLVADHLIAANLAGHDSHGIGMIPSYVRSWSQGHLQINHHAKIVKEAGAAVTLDGDRAFGQVAAHEAMALGIEKAHQHGIAAVALHNSHHIGRIGYWAEQCAAAGFVSIHFVSVVGIPMVAPFHGRDSRFGTNPFCVVFPRKDDFPLLLDYATSAIAFGKTRVAWHKGVPVPPGCLIDVNGVPTTNPAVMQESPLGSLLTFAEHKGYALAAMCEILGGALSGGKTTHQETLQTSPDAILNCMTTIIINPELFGAPDCSAQTEAFAEWVKASPHDDDKPILLPGEWEVNTRRERQEQGIPLDAGSWQAICDAARQIGMPEETLQAFCQQLAS.

NAD(+) contacts are provided by residues H48, 122-124 (GRI), 178-182 (LLDYA), H234, N270, and 313-316 (GEWE).

It belongs to the LDH2/MDH2 oxidoreductase family.

The enzyme catalyses 2-hydroxyglutarate + NADP(+) = 2-oxoglutarate + NADPH + H(+). It catalyses the reaction 2-hydroxyglutarate + NAD(+) = 2-oxoglutarate + NADH + H(+). It carries out the reaction 3-phenyllactate + NADP(+) = 3-phenylpyruvate + NADPH + H(+). The catalysed reaction is 3-phenyllactate + NAD(+) = 3-phenylpyruvate + NADH + H(+). The enzyme catalyses (2R)-2-hydroxy-3-(4-hydroxyphenyl)propanoate + NAD(+) = 3-(4-hydroxyphenyl)pyruvate + NADH + H(+). It catalyses the reaction (2R)-2-hydroxy-3-(4-hydroxyphenyl)propanoate + NADP(+) = 3-(4-hydroxyphenyl)pyruvate + NADPH + H(+). It carries out the reaction (2R)-3-(3,4-dihydroxyphenyl)lactate + NADP(+) = 3-(3,4-dihydroxyphenyl)pyruvate + NADPH + H(+). The catalysed reaction is (2R)-3-(3,4-dihydroxyphenyl)lactate + NAD(+) = 3-(3,4-dihydroxyphenyl)pyruvate + NADH + H(+). Its function is as follows. Catalyzes the NAD(P)H-dependent reduction of 2-oxoglutarate, phenylpyruvate and (4-hydroxyphenyl)pyruvate, leading to the respective 2-hydroxycarboxylate in vitro. Shows a preference for NADPH over NADH as a redox partner. Do not catalyze the reverse reactions. This Escherichia coli O157:H7 protein is Hydroxycarboxylate dehydrogenase B.